The chain runs to 225 residues: Probable septum site-determining protein MinC (225 aa).

This sequence belongs to the MinC family. Interacts with MinD and FtsZ.

In terms of biological role, cell division inhibitor that blocks the formation of polar Z ring septums. Rapidly oscillates between the poles of the cell to destabilize FtsZ filaments that have formed before they mature into polar Z rings. Prevents FtsZ polymerization. This Listeria welshimeri serovar 6b (strain ATCC 35897 / DSM 20650 / CCUG 15529 / CIP 8149 / NCTC 11857 / SLCC 5334 / V8) protein is Probable septum site-determining protein MinC.